A 124-amino-acid chain; its full sequence is Small ribosomal subunit protein bS6 (124 aa).

The tract at residues 101–124 (IMMKEVQREEARKSAQSDAPAVAA) is disordered. A compositionally biased stretch (basic and acidic residues) spans 105-115 (EVQREEARKSA).

Belongs to the bacterial ribosomal protein bS6 family.

Functionally, binds together with bS18 to 16S ribosomal RNA. The protein is Small ribosomal subunit protein bS6 of Polynucleobacter asymbioticus (strain DSM 18221 / CIP 109841 / QLW-P1DMWA-1) (Polynucleobacter necessarius subsp. asymbioticus).